Here is a 265-residue protein sequence, read N- to C-terminus: Undecaprenyl-diphosphatase (265 aa).

8 helical membrane-spanning segments follow: residues 1–21, 40–60, 87–107, 113–133, 151–173, 188–208, 214–234, and 244–264; these read MDWLHVVALAVIQGLTEFLPI, GLAFDVAVHVGSLAAVVLAFH, WAVIVGTLPAVVIGFLLENVI, ASLVIAITTLLFGLLLWWADV, IIGFAQALALIPGTSRSGITITA, SFLLSIPLILAAGSLKGVELI, VAWGTLVAGTLMSFVAAWLCI, and IGMLPFVIYRLILGIVLLVWV.

It belongs to the UppP family.

The protein resides in the cell inner membrane. It carries out the reaction di-trans,octa-cis-undecaprenyl diphosphate + H2O = di-trans,octa-cis-undecaprenyl phosphate + phosphate + H(+). Catalyzes the dephosphorylation of undecaprenyl diphosphate (UPP). Confers resistance to bacitracin. This is Undecaprenyl-diphosphatase from Chromohalobacter salexigens (strain ATCC BAA-138 / DSM 3043 / CIP 106854 / NCIMB 13768 / 1H11).